A 406-amino-acid polypeptide reads, in one-letter code: Argininosuccinate synthase (406 aa).

Residues Ala11–Ser19 and Ala38 each bind ATP. 2 residues coordinate L-citrulline: Tyr91 and Ser96. An ATP-binding site is contributed by Gly121. Positions 123, 127, and 128 each coordinate L-aspartate. Asn127 contributes to the L-citrulline binding site. The L-citrulline site is built by Arg131, Ser182, Ser191, Glu267, and Tyr279.

This sequence belongs to the argininosuccinate synthase family. Type 1 subfamily. Homotetramer.

It is found in the cytoplasm. The enzyme catalyses L-citrulline + L-aspartate + ATP = 2-(N(omega)-L-arginino)succinate + AMP + diphosphate + H(+). Its pathway is amino-acid biosynthesis; L-arginine biosynthesis; L-arginine from L-ornithine and carbamoyl phosphate: step 2/3. This Rhodospirillum centenum (strain ATCC 51521 / SW) protein is Argininosuccinate synthase.